The sequence spans 347 residues: Phenylalanine--tRNA ligase alpha subunit (347 aa).

Glu261 lines the Mg(2+) pocket.

This sequence belongs to the class-II aminoacyl-tRNA synthetase family. Phe-tRNA synthetase alpha subunit type 1 subfamily. In terms of assembly, tetramer of two alpha and two beta subunits. Mg(2+) serves as cofactor.

It is found in the cytoplasm. It carries out the reaction tRNA(Phe) + L-phenylalanine + ATP = L-phenylalanyl-tRNA(Phe) + AMP + diphosphate + H(+). The protein is Phenylalanine--tRNA ligase alpha subunit of Streptococcus uberis (strain ATCC BAA-854 / 0140J).